The following is a 420-amino-acid chain: Polyketide biosynthesis 3-hydroxy-3-methylglutaryl-ACP synthase PksG (420 aa).

Catalysis depends on Glu82, which acts as the Proton donor/acceptor. The active-site Acyl-thioester intermediate is Cys114. His250 functions as the Proton donor/acceptor in the catalytic mechanism.

The protein belongs to the thiolase-like superfamily. HMG-CoA synthase family.

Its subcellular location is the cytoplasm. It catalyses the reaction 3-oxobutanoyl-[ACP] + acetyl-[ACP] + H2O = (3S)-hydroxy-3-methylglutaryl-[ACP] + holo-[ACP] + H(+). The protein operates within antibiotic biosynthesis; bacillaene biosynthesis. In terms of biological role, involved in some intermediate steps for the synthesis of the antibiotic polyketide bacillaene which is involved in secondary metabolism. It catalyzes the aldol condensation between the acetyl group attached to the acyl-carrier-protein AcpK (Ac-AcpK) and a beta-ketothioester polyketide intermediate linked to one of the consecutive thiolation domains of PksL. The chain is Polyketide biosynthesis 3-hydroxy-3-methylglutaryl-ACP synthase PksG (pksG) from Bacillus subtilis (strain 168).